A 307-amino-acid polypeptide reads, in one-letter code: Elongation factor Ts (307 aa).

The segment at 80–83 is involved in Mg(2+) ion dislocation from EF-Tu; the sequence is TDFV.

This sequence belongs to the EF-Ts family.

It localises to the cytoplasm. In terms of biological role, associates with the EF-Tu.GDP complex and induces the exchange of GDP to GTP. It remains bound to the aminoacyl-tRNA.EF-Tu.GTP complex up to the GTP hydrolysis stage on the ribosome. This Methylobacterium sp. (strain 4-46) protein is Elongation factor Ts.